Consider the following 430-residue polypeptide: Ribosomal protein uS12 methylthiotransferase RimO (430 aa).

The region spanning 4–119 is the MTTase N-terminal domain; that stretch reads LKINFISLGC…IPVLFDIKPK (116 aa). [4Fe-4S] cluster-binding residues include Cys-13, Cys-49, Cys-82, Cys-141, Cys-145, and Cys-148. The Radical SAM core domain occupies 127–358; sequence STPKHTAYLK…SALQENITEQ (232 aa). The region spanning 361-430 is the TRAM domain; sequence KSLIGKELDI…DKYDVVGEAE (70 aa).

Belongs to the methylthiotransferase family. RimO subfamily. [4Fe-4S] cluster serves as cofactor.

The protein resides in the cytoplasm. The enzyme catalyses L-aspartate(89)-[ribosomal protein uS12]-hydrogen + (sulfur carrier)-SH + AH2 + 2 S-adenosyl-L-methionine = 3-methylsulfanyl-L-aspartate(89)-[ribosomal protein uS12]-hydrogen + (sulfur carrier)-H + 5'-deoxyadenosine + L-methionine + A + S-adenosyl-L-homocysteine + 2 H(+). In terms of biological role, catalyzes the methylthiolation of an aspartic acid residue of ribosomal protein uS12. The polypeptide is Ribosomal protein uS12 methylthiotransferase RimO (Sulfurihydrogenibium sp. (strain YO3AOP1)).